The chain runs to 226 residues: PKHD-type hydroxylase PiuC (226 aa).

The Fe2OG dioxygenase domain maps to 78 to 178 (KVFPPLFNCY…RYASFFWTQS (101 aa)). 3 residues coordinate Fe cation: H96, D98, and H159. R169 is a binding site for 2-oxoglutarate.

Fe(2+) is required as a cofactor. Requires L-ascorbate as cofactor.

The sequence is that of PKHD-type hydroxylase PiuC (piuC) from Pseudomonas aeruginosa (strain ATCC 15692 / DSM 22644 / CIP 104116 / JCM 14847 / LMG 12228 / 1C / PRS 101 / PAO1).